Consider the following 371-residue polypeptide: Opsin Rh1 (371 aa).

The Extracellular segment spans residues 1–47; it reads MERYSTPLIGPSFAALTNGSVTDKVTPDMAHLVHPYWNQFPAMEPKW. N-linked (GlcNAc...) asparagine glycosylation is present at N18. Residues 48–72 traverse the membrane as a helical segment; that stretch reads AKFLAAYMVLIATISWCGNGVVIYI. At 73 to 84 the chain is on the cytoplasmic side; it reads FSTTKSLRTPAN. The helical transmembrane segment at 85–110 threads the bilayer; that stretch reads LLVINLAISDFGIMITNTPMMGINLF. At 111–124 the chain is on the extracellular side; the sequence is YETWVLGPLMCDIY. A disulfide bond links C121 and C198. The helical transmembrane segment at 125 to 144 threads the bilayer; the sequence is GGLGSAFGCSSILSMCMISL. The Cytoplasmic portion of the chain corresponds to 145-163; it reads DRYNVIVKGMAGQPMTIKL. The chain crosses the membrane as a helical span at residues 164-187; sequence AIMKIALIWFMASIWTLAPVFGWS. At 188–211 the chain is on the extracellular side; sequence RYVPEGNLTSCGIDYLERDWNPRS. A helical transmembrane segment spans residues 212-239; sequence YLIFYSIFVYYLPLFLICYSYWFIIAAV. At 240–274 the chain is on the cytoplasmic side; that stretch reads SAHEKAMREQAKKMNVKSLRSSEDADKSAEGKLAK. A helical transmembrane segment spans residues 275 to 298; sequence VALVTISLWFMAWTPYTIINTLGL. The Extracellular portion of the chain corresponds to 299 to 305; the sequence is FKYEGLT. A helical membrane pass occupies residues 306–330; that stretch reads PLNTIWGACFAKSAACYNPIVYGIS. K317 is subject to N6-(retinylidene)lysine. The Cytoplasmic portion of the chain corresponds to 331-371; it reads HPKYGIALKEKCPCCVFGKVDDGKASDATSQATNNESETKA.

Belongs to the G-protein coupled receptor 1 family. Opsin subfamily. Phosphorylated on some or all of the serine and threonine residues present in the C-terminal region.

The protein localises to the cell projection. It is found in the rhabdomere membrane. Visual pigments are the light-absorbing molecules that mediate vision. They consist of an apoprotein, opsin, covalently linked to cis-retinal. The sequence is that of Opsin Rh1 (NINAE) from Calliphora vicina (Blue blowfly).